The chain runs to 271 residues: Tumor necrosis factor receptor superfamily member 4 (271 aa).

Residues 1 to 19 (MYVWVQQPTAFLLLGLSLG) form the signal peptide. The Extracellular portion of the chain corresponds to 20-210 (VTVKLNCVKD…TPTLVAPEGP (191 aa)). TNFR-Cys repeat units lie at residues 25–60 (NCVK…TVCH) and 61–102 (PCEP…DTVC). Intrachain disulfides connect Cys26-Cys37, Cys38-Cys51, Cys41-Cys59, Cys62-Cys76, Cys79-Cys94, Cys82-Cys102, Cys104-Cys122, and Cys125-Cys138. One copy of the TNFR-Cys 3; truncated repeat lies at 103–123 (QCRPGTQPRQDSSHKLGVDCV). The TNFR-Cys 4 repeat unit spans residues 124 to 164 (PCPPGHFSPGSNQACKPWTNCTLSGKQIRHPASNSLDTVCE). Asn143 carries N-linked (GlcNAc...) asparagine glycosylation. Cys144 and Cys163 are oxidised to a cystine. The chain crosses the membrane as a helical span at residues 211-235 (AFAVILGLGLGLLAPLTVLLALYLL). At 236 to 271 (RKAWRSPNTPKPCWGNSFRTPIQEEQTDTHFTLAKI) the chain is on the cytoplasmic side.

In terms of assembly, interacts with TRAF2, TRAF3 and TRAF5. In terms of tissue distribution, activated T-cells.

It is found in the membrane. Functionally, receptor for TNFSF4/OX40L/GP34. Is a costimulatory molecule implicated in long-term T-cell immunity. The sequence is that of Tumor necrosis factor receptor superfamily member 4 (Tnfrsf4) from Rattus norvegicus (Rat).